A 584-amino-acid polypeptide reads, in one-letter code: Chaperonin GroEL 1 (584 aa).

ATP contacts are provided by residues 29 to 32 (TIGP), 86 to 90 (DGTTT), Gly-413, and Asp-492. A disordered region spans residues 523-542 (EPEAAAPGGPGGDPMGGMGG). Residues 530–542 (GGPGGDPMGGMGG) are compositionally biased toward gly residues.

The protein belongs to the chaperonin (HSP60) family. Forms a cylinder of 14 subunits composed of two heptameric rings stacked back-to-back. Interacts with the co-chaperonin GroES.

It localises to the cytoplasm. It catalyses the reaction ATP + H2O + a folded polypeptide = ADP + phosphate + an unfolded polypeptide.. Its function is as follows. Together with its co-chaperonin GroES, plays an essential role in assisting protein folding. The GroEL-GroES system forms a nano-cage that allows encapsulation of the non-native substrate proteins and provides a physical environment optimized to promote and accelerate protein folding. In Prochlorococcus marinus (strain MIT 9312), this protein is Chaperonin GroEL 1.